The following is an 89-amino-acid chain: U1-hexatoxin-Iw1e (89 aa).

An N-terminal signal peptide occupies residues 1–18 (MLKFVVLIFVVIMASTFA). Cystine bridges form between cysteine 21–cysteine 32, cysteine 26–cysteine 40, cysteine 31–cysteine 66, cysteine 50–cysteine 74, and cysteine 68–cysteine 81. The propeptide occupies 87-89 (RSE).

The protein belongs to the MIT-like AcTx family. Expressed by the venom gland.

It localises to the secreted. In Illawarra wisharti (Illawarra funnel-web spider), this protein is U1-hexatoxin-Iw1e.